We begin with the raw amino-acid sequence, 757 residues long: 5-methyltetrahydropteroyltriglutamate--homocysteine methyltransferase (757 aa).

Residues 17 to 20 and lysine 117 contribute to the 5-methyltetrahydropteroyltri-L-glutamate site; that span reads RELK. Residues 434 to 436 and glutamate 487 each bind L-homocysteine; that span reads IGS. Residues 434–436 and glutamate 487 contribute to the L-methionine site; that span reads IGS. 5-methyltetrahydropteroyltri-L-glutamate contacts are provided by residues 518–519 and tryptophan 564; that span reads RC. Aspartate 602 contacts L-homocysteine. Aspartate 602 serves as a coordination point for L-methionine. Glutamate 608 contacts 5-methyltetrahydropteroyltri-L-glutamate. 3 residues coordinate Zn(2+): histidine 644, cysteine 646, and glutamate 668. Catalysis depends on histidine 697, which acts as the Proton donor. Cysteine 729 serves as a coordination point for Zn(2+).

This sequence belongs to the vitamin-B12 independent methionine synthase family. It depends on Zn(2+) as a cofactor.

The enzyme catalyses 5-methyltetrahydropteroyltri-L-glutamate + L-homocysteine = tetrahydropteroyltri-L-glutamate + L-methionine. It functions in the pathway amino-acid biosynthesis; L-methionine biosynthesis via de novo pathway; L-methionine from L-homocysteine (MetE route): step 1/1. Functionally, catalyzes the transfer of a methyl group from 5-methyltetrahydrofolate to homocysteine resulting in methionine formation. The polypeptide is 5-methyltetrahydropteroyltriglutamate--homocysteine methyltransferase (Proteus mirabilis (strain HI4320)).